A 1030-amino-acid chain; its full sequence is Tricorn protease (1030 aa).

The six-bladed beta propeller stretch occupies residues 1–270 (MANLLQNPDI…DNVKSLDIGP (270 aa)). The tract at residues 93-94 (RR) is binds the substrate's C-terminus. The seven-bladed beta propeller stretch occupies residues 286–635 (LEDFSMSPGD…EEEKSLNIDA (350 aa)). A C-1 region spans residues 641–712 (NVKEDFAEMY…RTSHSYEMGG (72 aa)). Residue His-706 is the Charge relay system of the active site. The segment at 721-816 (RAGRIACDFK…SGFVDVLQDD (96 aa)) is PDZ-like. Residues 817–1022 (RYIRYRAWVE…IEMVLADLEK (206 aa)) are C-2. Residue 877–879 (GGG) participates in substrate binding. Ser-926 functions as the Nucleophile in the catalytic mechanism. 954–956 (GIS) lines the substrate pocket. The Charge relay system role is filled by Glu-984.

Belongs to the peptidase S41B family. In terms of assembly, part of the tricorn proteolytic complex.

The protein localises to the cytoplasm. In terms of biological role, tricorn degrades oligopeptides in a sequential manner. The protein is Tricorn protease (tri) of Thermoplasma volcanium (strain ATCC 51530 / DSM 4299 / JCM 9571 / NBRC 15438 / GSS1).